A 521-amino-acid polypeptide reads, in one-letter code: NAD(P)H-quinone oxidoreductase subunit 2 (521 aa).

14 consecutive transmembrane segments (helical) span residues 15 to 35 (ILPE…DITF), 42 to 62 (WTPY…YTQW), 79 to 99 (LSIV…LMSV), 109 to 126 (IGEF…AMFL), 131 to 153 (ELVM…TGYM), 167 to 187 (LLIG…LYGL), 208 to 228 (LALV…IAAV), 242 to 262 (PTPV…ALAI), 276 to 296 (WQFI…VVAI), 304 to 324 (MLAY…VIGT), 332 to 352 (VFYL…VILF), 376 to 396 (LALS…GFFG), 398 to 418 (LYLF…LGLI), and 464 to 484 (VGLV…NPLL).

Belongs to the complex I subunit 2 family. In terms of assembly, NDH-1 can be composed of about 15 different subunits; different subcomplexes with different compositions have been identified which probably have different functions.

The protein localises to the cellular thylakoid membrane. The catalysed reaction is a plastoquinone + NADH + (n+1) H(+)(in) = a plastoquinol + NAD(+) + n H(+)(out). It carries out the reaction a plastoquinone + NADPH + (n+1) H(+)(in) = a plastoquinol + NADP(+) + n H(+)(out). NDH-1 shuttles electrons from an unknown electron donor, via FMN and iron-sulfur (Fe-S) centers, to quinones in the respiratory and/or the photosynthetic chain. The immediate electron acceptor for the enzyme in this species is believed to be plastoquinone. Couples the redox reaction to proton translocation, and thus conserves the redox energy in a proton gradient. Cyanobacterial NDH-1 also plays a role in inorganic carbon-concentration. This Acaryochloris marina (strain MBIC 11017) protein is NAD(P)H-quinone oxidoreductase subunit 2.